A 307-amino-acid polypeptide reads, in one-letter code: Mitochondrial brown fat uncoupling protein 1 (307 aa).

At 2–10 (VNPTTSEVH) the chain is on the mitochondrial intermembrane side. A helical transmembrane segment spans residues 11-32 (PTMGVKIFSAGVAACLADIITF). 3 Solcar repeats span residues 11–102 (PTMG…VQEY), 111–201 (PTLG…MKGA), and 210–295 (DDVP…LKKE). Residues 33-73 (PLDTAKVRLQIQGEGQISSTIRYKGVLGTITTLAKTEGLPK) lie on the Mitochondrial matrix side of the membrane. K56 serves as a coordination point for fatty acid 16:0. A helical transmembrane segment spans residues 74 to 96 (LYSGLPAGIQRQISFASLRIGLY). At 97 to 116 (DTVQEYFSSGKETPPTLGNR) the chain is on the mitochondrial intermembrane side. A helical membrane pass occupies residues 117 to 133 (ISAGLMTGGVAVFIGQP). Over 134–178 (TEVVKVRLQAQSHLHGIKPRYTGTYNAYRIIATTESFSTLWKGTT) the chain is Mitochondrial matrix. Residues 179 to 195 (PNLLRNVIINCVELVTY) form a helical membrane-spanning segment. Residues 196 to 212 (DLMKGALVNNQILADDV) are Mitochondrial intermembrane-facing. A helical membrane pass occupies residues 213–232 (PCHLLSAFVAGFCTTFLASP). Topologically, residues 233 to 266 (ADVVKTRFINSLPGQYPSVPSCAMTMLTKEGPTA) are mitochondrial matrix. C254 carries the post-translational modification Cysteine sulfenic acid (-SOH). Residues 267-289 (FFKGFVPSFLRLASWNVIMFVCF) form a helical membrane-spanning segment. Residue K269 participates in fatty acid 16:0 binding. The Mitochondrial intermembrane portion of the chain corresponds to 290 to 307 (EQLKKELSKSRQTVDCTT).

It belongs to the mitochondrial carrier (TC 2.A.29) family. In terms of assembly, most probably functions as a monomer. Binds one purine nucleotide per monomer. However, has also been suggested to function as a homodimer or a homotetramer. Tightly associates with cardiolipin in the mitochondrion inner membrane; may stabilize and regulate its activity. May undergo sulfenylation upon cold exposure. May increase the sensitivity of UCP1 thermogenic function to the activation by noradrenaline probably through structural effects. Post-translationally, may undergo ubiquitin-mediated proteasomal degradation. Brown adipose tissue.

The protein resides in the mitochondrion inner membrane. It catalyses the reaction H(+)(in) = H(+)(out). Has no constitutive proton transporter activity and has to be activated by long-chain fatty acids/LCFAs. Inhibited by purine nucleotides. Both purine nucleotides and LCFAs bind the cytosolic side of the transporter and directly compete to activate or inhibit it. Activated by noradrenaline and reactive oxygen species. Despite lacking canonical translational encoding for selenocysteine, a small pool of the protein has been observed to selectively incorporate selenocysteine at 'Cys-254'. Selenocysteine-modified protein is highly sensitive to redox modification and may constitute a pool of protein highly sensitive to activation by elevated levels of reactive oxygen species (ROS). Functionally, mitochondrial protein responsible for thermogenic respiration, a specialized capacity of brown adipose tissue and beige fat that participates in non-shivering adaptive thermogenesis to temperature and diet variations and more generally to the regulation of energy balance. Functions as a long-chain fatty acid/LCFA and proton symporter, simultaneously transporting one LCFA and one proton through the inner mitochondrial membrane. However, LCFAs remaining associated with the transporter via their hydrophobic tails, it results in an apparent transport of protons activated by LCFAs. Thereby, dissipates the mitochondrial proton gradient and converts the energy of substrate oxydation into heat instead of ATP. Regulates the production of reactive oxygen species/ROS by mitochondria. The polypeptide is Mitochondrial brown fat uncoupling protein 1 (Mesocricetus auratus (Golden hamster)).